The primary structure comprises 477 residues: Aspartyl/glutamyl-tRNA(Asn/Gln) amidotransferase subunit B (477 aa).

This sequence belongs to the GatB/GatE family. GatB subfamily. Heterotrimer of A, B and C subunits.

It carries out the reaction L-glutamyl-tRNA(Gln) + L-glutamine + ATP + H2O = L-glutaminyl-tRNA(Gln) + L-glutamate + ADP + phosphate + H(+). It catalyses the reaction L-aspartyl-tRNA(Asn) + L-glutamine + ATP + H2O = L-asparaginyl-tRNA(Asn) + L-glutamate + ADP + phosphate + 2 H(+). Allows the formation of correctly charged Asn-tRNA(Asn) or Gln-tRNA(Gln) through the transamidation of misacylated Asp-tRNA(Asn) or Glu-tRNA(Gln) in organisms which lack either or both of asparaginyl-tRNA or glutaminyl-tRNA synthetases. The reaction takes place in the presence of glutamine and ATP through an activated phospho-Asp-tRNA(Asn) or phospho-Glu-tRNA(Gln). This Bdellovibrio bacteriovorus (strain ATCC 15356 / DSM 50701 / NCIMB 9529 / HD100) protein is Aspartyl/glutamyl-tRNA(Asn/Gln) amidotransferase subunit B.